The primary structure comprises 310 residues: Cytosolic Fe-S cluster assembly factor Nubp1 homolog (310 aa).

Residues cysteine 8, cysteine 22, cysteine 25, and cysteine 31 each contribute to the [4Fe-4S] cluster site. 62–69 (GKGGVGKS) lines the ATP pocket. Residues cysteine 239 and cysteine 242 each coordinate [4Fe-4S] cluster.

Belongs to the Mrp/NBP35 ATP-binding proteins family. NUBP1/NBP35 subfamily. Heterotetramer of 2 Nubp1 and 2 Nubp2 chains. The cofactor is [4Fe-4S] cluster.

Its subcellular location is the cytoplasm. Functionally, component of the cytosolic iron-sulfur (Fe/S) protein assembly (CIA) machinery. Required for maturation of extramitochondrial Fe-S proteins. The Nubp1-Nubp2 heterotetramer forms a Fe-S scaffold complex, mediating the de novo assembly of an Fe-S cluster and its transfer to target apoproteins. The chain is Cytosolic Fe-S cluster assembly factor Nubp1 homolog from Drosophila willistoni (Fruit fly).